Reading from the N-terminus, the 706-residue chain is Transferrin-binding protein B (706 aa).

A signal peptide spans 1-20; it reads MKHIPLTTLCVAISAVLLTA. The N-palmitoyl cysteine moiety is linked to residue Cys-21. Cys-21 carries the S-diacylglycerol cysteine lipid modification. Disordered regions lie at residues 26 to 92 and 384 to 412; these read GSNP…KEQV and GSAIASDKEKDSETKHPFTSDAKDRLEGG. Over residues 42 to 51 the composition is skewed to gly residues; that stretch reads GNTGNTGNAG. Basic and acidic residues predominate over residues 389–410; it reads SDKEKDSETKHPFTSDAKDRLE.

It belongs to the TbpB family.

Its subcellular location is the cell outer membrane. The protein resides in the cell surface. In terms of biological role, moraxella acquires iron by extracting it from serum transferrin (TF) in its human host. Acts as a transferrin receptor and is required for transferrin utilization. The polypeptide is Transferrin-binding protein B (Moraxella catarrhalis (Branhamella catarrhalis)).